The chain runs to 320 residues: rRNA methyltransferase 2, mitochondrial (320 aa).

The transit peptide at 1–18 directs the protein to the mitochondrion; that stretch reads MILVYNRIRSIISSSLGR. S-adenosyl-L-methionine-binding positions include 83–86, aspartate 104, 178–179, and aspartate 203; these read PGAW and DI. The Proton acceptor role is filled by lysine 264.

Belongs to the class I-like SAM-binding methyltransferase superfamily. RNA methyltransferase RlmE family.

The protein localises to the mitochondrion. The catalysed reaction is uridine(2791) in 21S rRNA + S-adenosyl-L-methionine = 2'-O-methyluridine(2791) in 21S rRNA + S-adenosyl-L-homocysteine + H(+). Its function is as follows. S-adenosyl-L-methionine-dependent 2'-O-ribose methyltransferase that catalyzes the formation of 2'-O-methyluridine at position 2791 (Um2791) in the 21S mitochondrial large subunit ribosomal RNA (mtLSU rRNA), a universally conserved modification in the peptidyl transferase domain of the mtLSU rRNA. The sequence is that of rRNA methyltransferase 2, mitochondrial from Saccharomyces cerevisiae (strain ATCC 204508 / S288c) (Baker's yeast).